The following is a 1027-amino-acid chain: Protein translocase subunit SecA (1027 aa).

ATP-binding positions include Gln143, 161-165, and Asp661; that span reads GEGKT. Residues 981 to 1027 are disordered; it reads EESGTSNADNAGDNGPQTVIAEKKPGRNDLCPCGSGKKYKNCHGQQP. Positions 1011, 1013, 1022, and 1023 each coordinate Zn(2+).

It belongs to the SecA family. Monomer and homodimer. Part of the essential Sec protein translocation apparatus which comprises SecA, SecYEG and auxiliary proteins SecDF. Other proteins may also be involved. Zn(2+) serves as cofactor.

The protein localises to the cell inner membrane. It localises to the cytoplasm. It carries out the reaction ATP + H2O + cellular proteinSide 1 = ADP + phosphate + cellular proteinSide 2.. In terms of biological role, part of the Sec protein translocase complex. Interacts with the SecYEG preprotein conducting channel. Has a central role in coupling the hydrolysis of ATP to the transfer of proteins into and across the cell membrane, serving as an ATP-driven molecular motor driving the stepwise translocation of polypeptide chains across the membrane. The sequence is that of Protein translocase subunit SecA from Chlorobium limicola (strain DSM 245 / NBRC 103803 / 6330).